We begin with the raw amino-acid sequence, 278 residues long: Envelope glycoprotein L (278 aa).

Residues 1 to 30 (MCRRPDCGFSFSPGPVILLWCCLLLPIVSS) form the signal peptide. The 214-residue stretch at 43-256 (VPAECPELTR…DKYYAGLPPE (214 aa)) folds into the gL betaherpesvirus-type domain. A disulfide bridge links Cys154 with Cys159.

Belongs to the herpesviridae glycoprotein L (gL) family. Betaherpesvirinae gL subfamily. As to quaternary structure, interacts with glycoprotein H (gH); this interaction is necessary for the correct processing and cell surface expression of gH. Forms the envelope pentamer complex (PC) composed of gH, gL, UL128, UL130, and UL131A. The pentamer interacts with host NRP2. Forms the envelope trimer complex composed of gH, gL, and gO. The trimer interacts with host PDGFRA. The trimer also interacts with host EPHA2.

The protein localises to the virion membrane. It localises to the host cell membrane. The protein resides in the host Golgi apparatus. It is found in the host trans-Golgi network. Its function is as follows. The heterodimer glycoprotein H-glycoprotein L is required for the fusion of viral and plasma membranes leading to virus entry into the host cell. Acts as a functional inhibitor of gH and maintains gH in an inhibited form. Upon binding to host integrins, gL dissociates from gH leading to activation of the viral fusion glycoproteins gB and gH. In human cytomegalovirus, forms two distincts complexes to mediate viral entry, a trimer and a pentamer at the surface of the virion envelope. The gH-gL-gO trimer is required for infection in fibroblasts by interacting with host PDGFRA, and in glioblastoma cells by interacting with host EPHA2. The gH-gL-UL128-UL130-UL131A pentamer is essential for viral entry in epithelial, endothelial and myeloid cells via interaction with host NRP2. The protein is Envelope glycoprotein L of Human cytomegalovirus (strain 5160) (HHV-5).